The chain runs to 199 residues: Ribosomal RNA large subunit methyltransferase E (199 aa).

S-adenosyl-L-methionine contacts are provided by Gly53, Trp55, Asp73, Asp92, and Asp114. The active-site Proton acceptor is Lys154.

Belongs to the class I-like SAM-binding methyltransferase superfamily. RNA methyltransferase RlmE family.

It is found in the cytoplasm. The catalysed reaction is uridine(2552) in 23S rRNA + S-adenosyl-L-methionine = 2'-O-methyluridine(2552) in 23S rRNA + S-adenosyl-L-homocysteine + H(+). Functionally, specifically methylates the uridine in position 2552 of 23S rRNA at the 2'-O position of the ribose in the fully assembled 50S ribosomal subunit. This Treponema denticola (strain ATCC 35405 / DSM 14222 / CIP 103919 / JCM 8153 / KCTC 15104) protein is Ribosomal RNA large subunit methyltransferase E.